A 237-amino-acid chain; its full sequence is MPERYNRVLLKLSGEVFGGGGIGVDADVVSAKAREIAEIANSGVQVAVVVGGGNFFRGAELQQHGMQRDRADYMGMLGTVMNCLALQDFCEKAGVDTRVQTAITMGQVAEPYIPRKAERHMEKGRVVIFGAGSGMPYFSTDTVAAQRALEIGADALLMGKQGVDGVYDSDPKTNPNAHKFDELTYDEFLSRDLKVADATAVAMARDNDLTMVFFNLEMPGNISRVINGEDIGTTVHR.

11–14 (KLSG) is a binding site for ATP. The interval 18–23 (GGGGIG) is involved in allosteric activation by GTP. Residue G52 coordinates UMP. Residues G53 and R57 each coordinate ATP. UMP is bound by residues D72 and 133–140 (SGMPYFST). The ATP site is built by Q161, Y167, and D170.

Belongs to the UMP kinase family. As to quaternary structure, homohexamer.

Its subcellular location is the cytoplasm. It catalyses the reaction UMP + ATP = UDP + ADP. It functions in the pathway pyrimidine metabolism; CTP biosynthesis via de novo pathway; UDP from UMP (UMPK route): step 1/1. Its activity is regulated as follows. Allosterically activated by GTP. Inhibited by UTP. Catalyzes the reversible phosphorylation of UMP to UDP. This Cutibacterium acnes (strain DSM 16379 / KPA171202) (Propionibacterium acnes) protein is Uridylate kinase.